A 101-amino-acid polypeptide reads, in one-letter code: MAKKSSIEKNNRRRRMNRNAAAKRARLKAIIGDKTKPMEERFAATLKLAEMPRNSSATRIRNRCELTGRPRSNYRKNKLSRIALRDLGSRGLVPGLVKSSW.

The segment covering 1–10 has biased composition (basic and acidic residues); it reads MAKKSSIEKN. Positions 1–23 are disordered; it reads MAKKSSIEKNNRRRRMNRNAAAK. Over residues 11 to 23 the composition is skewed to basic residues; sequence NRRRRMNRNAAAK.

Belongs to the universal ribosomal protein uS14 family. In terms of assembly, part of the 30S ribosomal subunit. Contacts proteins S3 and S10.

Functionally, binds 16S rRNA, required for the assembly of 30S particles and may also be responsible for determining the conformation of the 16S rRNA at the A site. The chain is Small ribosomal subunit protein uS14 from Nitrobacter winogradskyi (strain ATCC 25391 / DSM 10237 / CIP 104748 / NCIMB 11846 / Nb-255).